We begin with the raw amino-acid sequence, 171 residues long: ATP synthase subunit b (171 aa).

The chain crosses the membrane as a helical span at residues Ile26–Ile46.

This sequence belongs to the ATPase B chain family. F-type ATPases have 2 components, F(1) - the catalytic core - and F(0) - the membrane proton channel. F(1) has five subunits: alpha(3), beta(3), gamma(1), delta(1), epsilon(1). F(0) has four main subunits: a(1), b(1), b'(1) and c(10-14). The alpha and beta chains form an alternating ring which encloses part of the gamma chain. F(1) is attached to F(0) by a central stalk formed by the gamma and epsilon chains, while a peripheral stalk is formed by the delta, b and b' chains.

The protein localises to the cellular thylakoid membrane. In terms of biological role, f(1)F(0) ATP synthase produces ATP from ADP in the presence of a proton or sodium gradient. F-type ATPases consist of two structural domains, F(1) containing the extramembraneous catalytic core and F(0) containing the membrane proton channel, linked together by a central stalk and a peripheral stalk. During catalysis, ATP synthesis in the catalytic domain of F(1) is coupled via a rotary mechanism of the central stalk subunits to proton translocation. Component of the F(0) channel, it forms part of the peripheral stalk, linking F(1) to F(0). This is ATP synthase subunit b from Synechococcus sp. (strain RCC307).